Here is a 141-residue protein sequence, read N- to C-terminus: Protein GAT3 (141 aa).

A GATA-type zinc finger spans residues 72–98 (CPQCAVIKTSPQWREGPDGEVTLCNAC).

The chain is Protein GAT3 (GAT3) from Saccharomyces cerevisiae (strain ATCC 204508 / S288c) (Baker's yeast).